The primary structure comprises 32 residues: Beta-amanitin proprotein (32 aa).

Residues 1–10 constitute a propeptide that is removed on maturation; sequence MSDINATRLP. Positions 11 to 18 form a cross-link, cyclopeptide (Ile-Pro); sequence IWGIGCDP. The segment at residues 12 to 16 is a cross-link (2'-cysteinyl-6'-hydroxytryptophan sulfoxide (Trp-Cys)); sequence WGIGC. The propeptide occupies 19–32; the sequence is CIGDDVTILLTRGE.

The protein belongs to the MSDIN fungal toxin family. Processed by the macrocyclase-peptidase enzyme POPB to yield a toxic cyclic decapeptide. POPB first removes 10 residues from the N-terminus. Conformational trapping of the remaining peptide forces the enzyme to release this intermediate rather than proceed to macrocyclization. The enzyme rebinds the remaining peptide in a different conformation and catalyzes macrocyclization of the N-terminal 8 residues.

In terms of biological role, toxin belonging to the bicyclic octapeptides amatoxins that acts by binding non-competitively to RNA polymerase II and greatly slowing the elongation of transcripts from target promoters. This chain is Beta-amanitin proprotein, found in Amanita phalloides (Death cap).